The primary structure comprises 209 residues: Glycolipid transfer protein B (209 aa).

2 tandem repeats follow at residues 45-55 (IKADITGNITK) and 56-66 (IRSVYESNPTQ). Residues 45–66 (IKADITGNITKIRSVYESNPTQ) are 2 X 12 AA approximate tandem repeats. 48 to 55 (DITGNITK) lines the beta-D-galactosyl-(1-&gt;4)-beta-D-glucosyl-(1&lt;-&gt;1)-N-[(9Z)-octadecenoyl]-sphing-4-enine pocket. Beta-D-galactosyl-(1-&gt;4)-beta-D-glucosyl-(1&lt;-&gt;1)-N-[(9Z)-octadecenoyl]-sphing-4-enine-binding residues include H140 and Y207.

It belongs to the GLTP family.

The protein localises to the cytoplasm. In terms of biological role, accelerates the intermembrane transfer of various glycolipids. Catalyzes the transfer of various glycosphingolipids between membranes but does not catalyze the transfer of phospholipids. May be involved in the intracellular translocation of glucosylceramides. The sequence is that of Glycolipid transfer protein B (gltp-b) from Xenopus laevis (African clawed frog).